The following is a 165-amino-acid chain: Putative protein FAM86C1P (165 aa).

Belongs to the class I-like SAM-binding methyltransferase superfamily. EEF2KMT family. As to quaternary structure, interacts with EEF2KMT.

This chain is Putative protein FAM86C1P, found in Homo sapiens (Human).